We begin with the raw amino-acid sequence, 625 residues long: Vicilin-like antimicrobial peptides 2-3 (625 aa).

Disordered regions lie at residues 120 to 152 (QQKR…QQRE) and 180 to 212 (RQHG…NPYY). A compositionally biased stretch (basic and acidic residues) spans 198 to 212 (RYEEGEEKQSDNPYY). Cupin type-1 domains are found at residues 230–369 (SVLE…ERLR) and 414–584 (YNLF…KEVE). Positions 594 to 614 (IFFPGPRQHQQQSPRSTKQQQ) are disordered. The span at 601–614 (QHQQQSPRSTKQQQ) shows a compositional bias: low complexity.

The protein belongs to the 7S seed storage protein family.

Its subcellular location is the secreted. Functionally, antimicrobial peptides 2b, 2c and 2d have antibacterial and antifungal activity against a range of species. This chain is Vicilin-like antimicrobial peptides 2-3, found in Macadamia integrifolia (Macadamia nut).